We begin with the raw amino-acid sequence, 78 residues long: Signal peptidase complex subunit 1 (78 aa).

Residues 1–18 lie on the Cytoplasmic side of the membrane; sequence MNYLEGTIDFAGQLRCQK. Residues 19 to 38 traverse the membrane as a helical segment; that stretch reads YMNYGLCTSAVISYIYGYLV. The Lumenal portion of the chain corresponds to 39–42; the sequence is QDSY. Residues 43 to 63 traverse the membrane as a helical segment; the sequence is CVIKLFLILASLVALVCLPAW. The Cytoplasmic segment spans residues 64–78; that stretch reads SMYNKNPLKFQKKKE.

It belongs to the SPCS1 family. As to quaternary structure, component of the signal peptidase complex (SPC) composed of a catalytic subunit sec11 and three accessory subunits spc1, spc2 and spc3. The complex induces a local thinning of the ER membrane which is used to measure the length of the signal peptide (SP) h-region of protein substrates. This ensures the selectivity of the complex towards h-regions shorter than 18-20 amino acids. SPC associates with the translocon complex.

Its subcellular location is the endoplasmic reticulum membrane. Functionally, component of the signal peptidase complex (SPC) which catalyzes the cleavage of N-terminal signal sequences from nascent proteins as they are translocated into the lumen of the endoplasmic reticulum. Dispensable for SPC enzymatic activity. The sequence is that of Signal peptidase complex subunit 1 from Schizosaccharomyces pombe (strain 972 / ATCC 24843) (Fission yeast).